The sequence spans 336 residues: L-Ala-D/L-amino acid epimerase (336 aa).

Substrate is bound by residues threonine 130 and 152–154; that span reads KIK. Residues aspartate 178, glutamate 204, and aspartate 229 each contribute to the Mg(2+) site. Substrate-binding positions include lysine 251 and 301–303; that span reads DMD.

Belongs to the mandelate racemase/muconate lactonizing enzyme family. Mg(2+) serves as cofactor.

In terms of biological role, catalyzes the epimerization of D-Ala-D-Ala to D-Ala-L-Ala. Has broad substrate specificity and catalyzes the epimerization of a variety of dipeptides containing an N-terminal Ala followed by Ser, Thr, Val, Met, His, Phe or Trp (in vitro). This is L-Ala-D/L-amino acid epimerase from Flavobacterium johnsoniae (strain ATCC 17061 / DSM 2064 / JCM 8514 / BCRC 14874 / CCUG 350202 / NBRC 14942 / NCIMB 11054 / UW101) (Cytophaga johnsonae).